A 132-amino-acid polypeptide reads, in one-letter code: Glycine cleavage system H protein (132 aa).

One can recognise a Lipoyl-binding domain in the interval 24 to 107 (TATIGLSAFA…GEEGWLIKVR (84 aa)). Lysine 65 carries the post-translational modification N6-lipoyllysine.

The protein belongs to the GcvH family. As to quaternary structure, the glycine cleavage system is composed of four proteins: P, T, L and H. (R)-lipoate is required as a cofactor.

Its function is as follows. The glycine cleavage system catalyzes the degradation of glycine. The H protein shuttles the methylamine group of glycine from the P protein to the T protein. This chain is Glycine cleavage system H protein, found in Synechocystis sp. (strain ATCC 27184 / PCC 6803 / Kazusa).